A 460-amino-acid polypeptide reads, in one-letter code: Cysteine--tRNA ligase (460 aa).

Residue C27 coordinates Zn(2+). A 'HIGH' region motif is present at residues 29-39 (PTVYDLIHVGN). Positions 207, 232, and 236 each coordinate Zn(2+). The 'KMSKS' region signature appears at 264–268 (KMSKS). K267 provides a ligand contact to ATP.

It belongs to the class-I aminoacyl-tRNA synthetase family. In terms of assembly, monomer. It depends on Zn(2+) as a cofactor.

Its subcellular location is the cytoplasm. The catalysed reaction is tRNA(Cys) + L-cysteine + ATP = L-cysteinyl-tRNA(Cys) + AMP + diphosphate. This is Cysteine--tRNA ligase from Thermotoga petrophila (strain ATCC BAA-488 / DSM 13995 / JCM 10881 / RKU-1).